Here is a 319-residue protein sequence, read N- to C-terminus: Putative G-protein coupled receptor B0244.7 (319 aa).

Asn-28 carries N-linked (GlcNAc...) asparagine glycosylation. The next 6 helical transmembrane spans lie at 49–69 (AIFIIPCCMSFFALFLNIYIF), 107–127 (LPVIIFLTHFNFWVIALFIIF), 131–151 (SFLSFIGGMVGTTLTIYIAVV), 166–186 (VLLILLLWVSAITVAISCGIV), 206–226 (GPVLIFGIVCIATAFSICLVI), and 261–281 (LFAGFFVFATMAIFEIASAII).

This sequence belongs to the G-protein coupled receptor 1 family. B0244 subfamily.

It is found in the cell membrane. The chain is Putative G-protein coupled receptor B0244.7 from Caenorhabditis elegans.